Consider the following 491-residue polypeptide: Cyclin-A1-3 (491 aa).

Positions 1 to 21 are enriched in low complexity; it reads MSSSLASRRSSSSSAAKRPAA. Disordered stretches follow at residues 1-32 and 69-106; these read MSSSLASRRSSSSSAAKRPAAGEGGGKAAAGA and SLASGRNVGTNRVSAVKSASTKPASAISRHESAPQKES. A compositionally biased stretch (polar residues) spans 75–91; the sequence is NVGTNRVSAVKSASTKP.

Belongs to the cyclin family. Cyclin AB subfamily.

In Oryza sativa subsp. japonica (Rice), this protein is Cyclin-A1-3 (CYCA1-3).